We begin with the raw amino-acid sequence, 209 residues long: Probable endopeptidase Cgl2188 (209 aa).

The first 35 residues, 1-35, serve as a signal peptide directing secretion; that stretch reads MGKHRRNNSNATRKAVAASAVALGATAAIASPAQA. In terms of domain architecture, NlpC/P60 spans 95–209; the sequence is ASTGQAIVDA…YMPFHSAVRF (115 aa). The active-site Nucleophile is the Cys125. The Proton acceptor role is filled by His173. His185 is an active-site residue.

Belongs to the peptidase C40 family.

Its subcellular location is the secreted. This chain is Probable endopeptidase Cgl2188, found in Corynebacterium glutamicum (strain ATCC 13032 / DSM 20300 / JCM 1318 / BCRC 11384 / CCUG 27702 / LMG 3730 / NBRC 12168 / NCIMB 10025 / NRRL B-2784 / 534).